A 712-amino-acid chain; its full sequence is MKFFVSCAKGLEYLLADELSALGLEKATATIAGVNAEGELEQALRIVMWSRLASRVLWPIDAFECPDEQALYDGVRALPWHEHIKPEMTLAVDAHVSGDKITHARFAAQRIKDAIVDRMRDEGLERPSVNTDLPDVRVNLSLRKGRASLSIDLGGGSLHRRGWRGAAHEAPLKENLAAALLLRAQWPRLHAAGGGLLDPMCGSGTLLIEGALMAADVAPGLMRHGSLPPSRWLGFDKAAWKAIQSEARDREAAGLAALKPVIHGSDIDPTAIQAARENAEVAGVAHAIRFTRADVADLAAPEQEIGAVVCNPPYDERLAADPALYRALGNALQKAVPQWRASLLCGNDELAFATGLRAGKKYQMFNGALECALIICDPIAVPGRDPAQPRELSEGAQMVANRLRKNLKKFKSWRAREDITCFRAYDADLPEYAAAIDVYEEDGGQRRTFLHVQEYAAPAAIPENDVRRRRNELLAAAREVFGVPPEQVSMKSRERGKGGSKYGRFEQRDEFIVVRENNALLQVNLFDYLDTGLFLDHRPLRRMMAEQALGKRFLNLFCYTGVASVQAAVAGAASTTSVDLSATYLQWCYDNLALNGQGGNQHLLVQADAMAWLEGDRGQYDVIFCDPPTFSNSARADDFDVQREQLKLLRAAVARLAPGGVLYFSNNFRRFKLEENAIAEFAQCREITARTIGPDFERNARIHRAWELKRLG.

In terms of domain architecture, THUMP spans 42 to 153 (QALRIVMWSR…KGRASLSIDL (112 aa)).

It belongs to the methyltransferase superfamily. RlmKL family.

It localises to the cytoplasm. It carries out the reaction guanosine(2445) in 23S rRNA + S-adenosyl-L-methionine = N(2)-methylguanosine(2445) in 23S rRNA + S-adenosyl-L-homocysteine + H(+). The catalysed reaction is guanosine(2069) in 23S rRNA + S-adenosyl-L-methionine = N(2)-methylguanosine(2069) in 23S rRNA + S-adenosyl-L-homocysteine + H(+). In terms of biological role, specifically methylates the guanine in position 2445 (m2G2445) and the guanine in position 2069 (m7G2069) of 23S rRNA. This Stenotrophomonas maltophilia (strain R551-3) protein is Ribosomal RNA large subunit methyltransferase K/L.